The sequence spans 247 residues: Protein AC124 (247 aa).

It is found in the host cytoplasm. Its subcellular location is the host nucleus. In terms of biological role, accelerates mortality in insect larvae. This chain is Protein AC124, found in Lepidoptera (butterflies and moths).